The primary structure comprises 728 residues: LPS-assembly protein LptD (728 aa).

A signal peptide spans 1 to 21; it reads MSALPGFTLAALLLNVSLAEA.

The protein belongs to the LptD family. In terms of assembly, component of the lipopolysaccharide transport and assembly complex. Interacts with LptE and LptA.

It is found in the cell outer membrane. Together with LptE, is involved in the assembly of lipopolysaccharide (LPS) at the surface of the outer membrane. The sequence is that of LPS-assembly protein LptD from Thiobacillus denitrificans (strain ATCC 25259 / T1).